A 65-amino-acid chain; its full sequence is Alpha-toxin Bot11 (65 aa).

Positions 2-64 (KDGYIVDDRN…VRTVQAGRCR (63 aa)) constitute an LCN-type CS-alpha/beta domain. 4 disulfide bridges follow: C12-C63, C16-C36, C22-C46, and C26-C48.

The protein belongs to the long (4 C-C) scorpion toxin superfamily. Sodium channel inhibitor family. Alpha subfamily. As to expression, expressed by the venom gland.

The protein localises to the secreted. Functionally, alpha toxins bind voltage-independently at site-3 of sodium channels (Nav) and inhibit the inactivation of the activated channels, thereby blocking neuronal transmission. The protein is Alpha-toxin Bot11 of Buthus occitanus tunetanus (Common European scorpion).